The sequence spans 197 residues: Protein GrpE (197 aa).

A compositionally biased stretch (basic and acidic residues) spans 1–31 (MSDDTKKQDTAADAEVEKEMEGVPEHLRDDR). Positions 1–48 (MSDDTKKQDTAADAEVEKEMEGVPEHLRDDRGSEEDASDDLSAALESL) are disordered.

This sequence belongs to the GrpE family. In terms of assembly, homodimer.

Its subcellular location is the cytoplasm. In terms of biological role, participates actively in the response to hyperosmotic and heat shock by preventing the aggregation of stress-denatured proteins, in association with DnaK and GrpE. It is the nucleotide exchange factor for DnaK and may function as a thermosensor. Unfolded proteins bind initially to DnaJ; upon interaction with the DnaJ-bound protein, DnaK hydrolyzes its bound ATP, resulting in the formation of a stable complex. GrpE releases ADP from DnaK; ATP binding to DnaK triggers the release of the substrate protein, thus completing the reaction cycle. Several rounds of ATP-dependent interactions between DnaJ, DnaK and GrpE are required for fully efficient folding. The polypeptide is Protein GrpE (Erythrobacter litoralis (strain HTCC2594)).